The following is a 454-amino-acid chain: Probable tRNA methyltransferase 9B (454 aa).

Ser214 carries the post-translational modification Phosphoserine.

Belongs to the methyltransferase superfamily. As to expression, down-regulated in breast, bladder, colorectal, cervix and testicular carcinomas.

May modify wobble uridines in specific arginine and glutamic acid tRNAs. Acts as a tumor suppressor by promoting the expression of LIN9. This is Probable tRNA methyltransferase 9B from Homo sapiens (Human).